The following is a 467-amino-acid chain: MEDVAVAAALAPAPATAPVFSPAAAGLTLIAAAAADPIAAVVAGAMDGVVTVPPVRTASAVEDDAVAPGRGEEGGEASAVGSPCSVTSDCSSVASADFEGVGLGFFGAAADGGAAMVFEDSAASAATVEAEARVAAGARSVFAVECVPLWGHKSICGRRPEMEDAVVAVSRFFDIPLWMLTGNSVVDGLDPMSFRLPAHFFGVYDGHGGAQVANYCRERLHAALVEELSRIEGSVSGANLGSVEFKKKWEQAFVDCFSRVDEEVGGNASRGEAVAPETVGSTAVVAVICSSHIIVANCGDSRAVLCRGKQPVPLSVDHKPNREDEYARIEAEGGKVIQWNGYRVFGVLAMSRSIGDRYLKPWIIPVPEITIVPRAKDDECLVLASDGLWDVMSNEEVCDVARKRILLWHKKNGTNPASAPRSGDSSDPAAEAAAECLSKLALQKGSKDNISVIVVDLKAHRKFKSKS.

The segment at 61–81 is disordered; that stretch reads VEDDAVAPGRGEEGGEASAVG. One can recognise a PPM-type phosphatase domain in the interval 149–457; that stretch reads LWGHKSICGR…DNISVIVVDL (309 aa). Positions 205, 206, 386, and 448 each coordinate Mn(2+).

This sequence belongs to the PP2C family. In terms of assembly, interacts with PYL9. The cofactor is Mg(2+). Mn(2+) is required as a cofactor.

It localises to the nucleus. The protein resides in the cytoplasm. The protein localises to the cytosol. The enzyme catalyses O-phospho-L-seryl-[protein] + H2O = L-seryl-[protein] + phosphate. The catalysed reaction is O-phospho-L-threonyl-[protein] + H2O = L-threonyl-[protein] + phosphate. Functionally, probable protein phosphatase that may function in abscisic acid (ABA) signaling. In Oryza sativa subsp. japonica (Rice), this protein is Probable protein phosphatase 2C 6.